The primary structure comprises 329 residues: Ubiquitin carboxyl-terminal hydrolase isozyme L5 (329 aa).

One can recognise a UCH catalytic domain in the interval 7–225 (EWCLMESDPG…IRFNLMAIVS (219 aa)). Position 47 is an N6-succinyllysine (K47). C88 functions as the Nucleophile in the catalytic mechanism. K158 carries the post-translational modification N6-acetyllysine. H164 functions as the Proton donor in the catalytic mechanism. K289 is modified (N6-succinyllysine). A ULD domain is found at 291–319 (NYLPFIMELLKTLAEHQQLIPLVEKAKEK). The interaction with ADRM1 stretch occupies residues 313–329 (VEKAKEKQNAKKAQETK).

Belongs to the peptidase C12 family. In terms of assembly, component of the 19S (PA700) regulatory complex of the 26S proteasome. Interacts with ADRM1 and NFRKB; in vitro ADRM1 and NFRKB compete for interaction with UCHL5. Component of the INO80 complex; specifically part of a complex module associated with N-terminus of INO80.

It localises to the cytoplasm. It is found in the nucleus. It catalyses the reaction Thiol-dependent hydrolysis of ester, thioester, amide, peptide and isopeptide bonds formed by the C-terminal Gly of ubiquitin (a 76-residue protein attached to proteins as an intracellular targeting signal).. Its activity is regulated as follows. Activated by ADRM1. Inhibited by interaction with NFRKB. Its function is as follows. Protease that specifically cleaves 'Lys-48'-linked polyubiquitin chains. Deubiquitinating enzyme associated with the 19S regulatory subunit of the 26S proteasome. Putative regulatory component of the INO80 complex; however is inactive in the INO80 complex and is activated by a transient interaction of the INO80 complex with the proteasome via ADRM1. This chain is Ubiquitin carboxyl-terminal hydrolase isozyme L5 (UCHL5), found in Homo sapiens (Human).